The sequence spans 830 residues: uncharacterized protein (830 aa).

Over residues 1-12 the composition is skewed to basic and acidic residues; sequence MEKASKNKESGV. The interval 1-61 is disordered; sequence MEKASKNKES…SIKSKNKKKT (61 aa). Polar residues predominate over residues 15–25; that stretch reads ANNSFLQNFGV. The Helicase ATP-binding domain occupies 249–433; it reads TVSKSSASGG…YSLVKFLHIN (185 aa). 262-269 contacts ATP; the sequence is DDMGLGKT. Positions 384 to 387 match the DEAH box motif; sequence DEAH. Residues 662–816 form the Helicase C-terminal domain; it reads EEDDTVRGLR…KSVFTSKKLT (155 aa). Position 712 is a phosphoserine (S712).

This sequence belongs to the SNF2/RAD54 helicase family.

Its subcellular location is the nucleus. This is an uncharacterized protein from Schizosaccharomyces pombe (strain 972 / ATCC 24843) (Fission yeast).